The chain runs to 795 residues: MKFSELWLREWVNPAIDSDTLANQITMAGLEVDGVEPVAGSFHGVVVGEVVECAQHPNADKLRVTKVNVGGDRLLDIVCGAPNCRQGLRVAVATIGAVLPGDFKIKAAKLRGEPSEGMLCSFSELGISDDHSGIIELPADAPIGTDIREYLKLDDNTIEISVTPNRADCLGIIGVARDVAVLNQLPLVEPEIVPVGATIDDTLPITVEAPEACPRYLGRVVKGINVKAPTPLWMKEKLRRCGIRSIDAVVDVTNYVLLELGQPMHAFDKDRIEGGIVVRMAKEGETLVLLDGTEAKLNADTLVIADHNKALAMGGIFGGEHSGVNDETQNVLLECAFFSPLSITGRARRHGLHTDASHRYERGVDPVLQHKAMERATRLLIDICGGEAGPVIDITNEATLPKRATITLRRSKLDRLIGHHIADEQVTDILRRLGCEVTEGKDEWQAVAPSWRFDMEIEEDLVEEVARVYGYNNIPDEPVQASLIMGTHREADLSLKRVKTLLNDKGYQEVITYSFVDPKVQQMIHPGVEALLLASPISVEMSAMRLSLWTGLLATVVYNQNRQQNRVRIFESGLRFVPDTQAPLGIRQDLMLAGVICGNRYEEHWNLAKETVDFYDLKGDLESVLDLTGKLNEVEFRAEANPALHPGQSAAIYLKGERIGFVGVVHPELERKLDLNGRTLVFELEWNKLADRVVPQAREISRFPANRRDIAVVVAENVPAADILSECKKVGVNQVVGVNLFDVYRGKGVAEGYKSLAISLILQDTSRTLEEEEIAATVAKCVEALKERFQASLRD.

A tRNA-binding domain is found at alanine 39–arginine 148. The 76-residue stretch at proline 401–aspartate 476 folds into the B5 domain. Positions 454, 460, 463, and 464 each coordinate Mg(2+). The FDX-ACB domain occupies serine 701–arginine 794.

It belongs to the phenylalanyl-tRNA synthetase beta subunit family. Type 1 subfamily. As to quaternary structure, tetramer of two alpha and two beta subunits. Requires Mg(2+) as cofactor.

Its subcellular location is the cytoplasm. It catalyses the reaction tRNA(Phe) + L-phenylalanine + ATP = L-phenylalanyl-tRNA(Phe) + AMP + diphosphate + H(+). This is Phenylalanine--tRNA ligase beta subunit from Shigella flexneri.